The sequence spans 30 residues: Cycloviolacin-O24 (30 aa).

The cyclopeptide (Gly-Asn) cross-link spans 1 to 30 (GLPTCGETCFGGTCNTPGCTCDPWPVCTHN). 3 disulfides stabilise this stretch: cysteine 5-cysteine 19, cysteine 9-cysteine 21, and cysteine 14-cysteine 27.

In terms of processing, this is a cyclic peptide. In terms of tissue distribution, expressed in leaves but not in petals, petioles, roots and runners (at protein level).

Functionally, probably participates in a plant defense mechanism. Has hemolytic activity. The polypeptide is Cycloviolacin-O24 (Viola odorata (Sweet violet)).